We begin with the raw amino-acid sequence, 292 residues long: Protein LRATD1 (292 aa).

Ser38 is modified (phosphoserine). The region spanning 133–228 is the LRAT domain; it reads PAPEPPAPAP…CRFGKREFKA (96 aa).

Belongs to the LRATD family. Only detected in testis. Highly expressed in colon cancer cells.

It localises to the cytoplasm. May play a role in cell morphology and motility. The chain is Protein LRATD1 from Homo sapiens (Human).